A 449-amino-acid polypeptide reads, in one-letter code: C4-dicarboxylate transport protein (449 aa).

9 helical membrane passes run 5-25 (AVFK…VSLG), 45-65 (LIKM…IAGM), 77-97 (LAVL…LIVV), 149-169 (GDML…HSFG), 185-205 (VLFG…FGAM), 231-251 (CVIF…FSII), 298-318 (GYSF…VFIA), 332-352 (TLLV…GSGF), and 353-373 (IVLA…LALI).

The protein belongs to the dicarboxylate/amino acid:cation symporter (DAACS) (TC 2.A.23) family.

The protein resides in the cell inner membrane. Its function is as follows. Responsible for the transport of dicarboxylates such as succinate, fumarate, and malate from the periplasm across the membrane. The polypeptide is C4-dicarboxylate transport protein (Dechloromonas aromatica (strain RCB)).